The sequence spans 355 residues: dTDP-D-glucose 4,6-dehydratase (355 aa).

Thr142 provides a ligand contact to substrate. Asp143 (proton donor) is an active-site residue. Residues Glu144 and Tyr166 each act as proton acceptor in the active site.

Belongs to the NAD(P)-dependent epimerase/dehydratase family. dTDP-glucose dehydratase subfamily. NAD(+) serves as cofactor.

The catalysed reaction is dTDP-alpha-D-glucose = dTDP-4-dehydro-6-deoxy-alpha-D-glucose + H2O. The protein is dTDP-D-glucose 4,6-dehydratase (TGDS) of Bos taurus (Bovine).